Here is a 161-residue protein sequence, read N- to C-terminus: Troponin C, slow skeletal and cardiac muscles (161 aa).

Met1 is subject to N-acetylmethionine. EF-hand domains lie at Gln16–Asn51, Pro52–Asp87, Lys92–Thr127, and Ile128–Glu161. 5 residues coordinate Ca(2+): Asp65, Asp67, Ser69, Thr71, and Glu76. At Ser98 the chain carries Phosphoserine. Residues Asp105, Asn107, Asp109, Tyr111, Glu116, Asp141, Asn143, Asp145, Arg147, and Glu152 each coordinate Ca(2+).

This sequence belongs to the troponin C family.

Its function is as follows. Troponin is the central regulatory protein of striated muscle contraction. Tn consists of three components: Tn-I which is the inhibitor of actomyosin ATPase, Tn-T which contains the binding site for tropomyosin and Tn-C. The binding of calcium to Tn-C abolishes the inhibitory action of Tn on actin filaments. The protein is Troponin C, slow skeletal and cardiac muscles (TNNC1) of Homo sapiens (Human).